Here is a 455-residue protein sequence, read N- to C-terminus: Membrane protein Pbs54 (455 aa).

The helical transmembrane segment at 12–32 (IISIIILILRISLFSCAEHLF) threads the bilayer. N41, N102, and N125 each carry an N-linked (GlcNAc...) asparagine glycan. The next 6 helical transmembrane spans lie at 181–201 (IFLI…LFNG), 220–240 (FIFF…LSCI), 244–264 (ILTF…FYLF), 285–305 (ILIG…IIFI), 312–332 (FLVK…IFFL), and 346–366 (FVFS…FWNI). An N-linked (GlcNAc...) asparagine glycan is attached at N373. The helical transmembrane segment at 398–418 (NMFALFMIFAMSILSIIFPRI) threads the bilayer.

It is found in the cell projection. Its subcellular location is the cilium. It localises to the flagellum. The protein resides in the cell membrane. Functionally, plays a role in gamete fertilization. Required for the successful transmission of parasites to mosquito. The protein is Membrane protein Pbs54 of Plasmodium berghei (strain Anka).